The primary structure comprises 59 residues: Large ribosomal subunit protein bL32 (59 aa).

Residues 1–20 (MAVQQNKKSRSRKGMRRSHD) are disordered. Residues 7–19 (KKSRSRKGMRRSH) show a composition bias toward basic residues.

This sequence belongs to the bacterial ribosomal protein bL32 family.

The protein is Large ribosomal subunit protein bL32 of Nitratidesulfovibrio vulgaris (strain ATCC 29579 / DSM 644 / CCUG 34227 / NCIMB 8303 / VKM B-1760 / Hildenborough) (Desulfovibrio vulgaris).